The following is a 216-amino-acid chain: Ras-related protein RABE1a (216 aa).

22 to 29 (GDSGVGKS) lines the GTP pocket. Positions 44 to 52 (FITTIGIDF) match the Effector region motif. GTP-binding positions include 70–74 (DTAGQ), 128–131 (NKAD), and 159–160 (SA). The interval 185–216 (DARAEPQTIKINQSDQGAGTSQATQKSACCGT) is disordered. Positions 193-216 (IKINQSDQGAGTSQATQKSACCGT) are enriched in polar residues. 2 S-geranylgeranyl cysteine lipidation sites follow: cysteine 213 and cysteine 214.

The protein belongs to the small GTPase superfamily. Rab family. Interacts with PI5K2.

The protein resides in the golgi apparatus membrane. Its subcellular location is the cell membrane. Functionally, involved in membrane trafficking from the Golgi to the plasma membrane. This is Ras-related protein RABE1a (RABE1A) from Arabidopsis thaliana (Mouse-ear cress).